A 239-amino-acid polypeptide reads, in one-letter code: MGRKWNNIKDKKASKDANTSRIYAKFGREIYVAAKQGEPDPESNQALRVVLERAKTYNVPRTIIDRAVEKAKGGSEENYDELRYEGFGPNGAMVIVDTLTNNVNRTAADVRAAFSKNGGNMGVNGSVAYMFDATAVIGLEGKTSDEVLEILMEADVDARDILEEEDAVIVYAEPDQFHAVQSALKDAGVEEFTVAELTMLAQNDVTLPEDAQAQFEKMVDALEDLEDVQQVYHNVDLGE.

It belongs to the TACO1 family. YeeN subfamily.

The protein localises to the cytoplasm. The chain is Probable transcriptional regulatory protein BCQ_0605 from Bacillus cereus (strain Q1).